Reading from the N-terminus, the 521-residue chain is Spermidine transporter DUR31 (521 aa).

The chain crosses the membrane as a helical span at residues 11–31 (AIIYLSYAFMLATGLFLAWKF). An N-linked (GlcNAc...) asparagine glycan is attached at Asn41. 12 helical membrane-spanning segments follow: residues 47 to 67 (IPLALNFVASAMGVGIITTYA), 79 to 99 (LVYTICGAIPIVGFAVVGPVI), 117 to 137 (FGMVTALYLSAFTCLTMFLFM), 156 to 176 (ALGAVIVECVVTTIYTFFGGF), 187 to 207 (GVCVLLLLIICAAGMGSYIEI), 227 to 247 (LVYILFVAIVTNDCFMSGFWL), 264 to 284 (IAAFVTFAICTLIGTTGFLAV), 310 to 330 (WLVAFVLIFCIVLSTCTFDSL), 354 to 374 (IMLILIMVPIVVLAVKVADNI), 377 to 397 (IYLIADLVSAAIIPSVFLGLA), 406 to 426 (GFDVMAGGLGALLGVFIFGTV), and 453 to 473 (FGAFVIAPVGGVIITLASAAL).

This sequence belongs to the sodium:solute symporter (SSF) (TC 2.A.21) family.

The protein resides in the membrane. The enzyme catalyses spermidine(in) = spermidine(out). In terms of biological role, spermidine transporter that is also used by salivary gland-secreted histatin 5 (Hst 5) to enter into candidal cells. A major component of host nonimmune defense systems is salivary histatins, a family of small (3-4 kDa), histidine-rich, cationic proteins secreted by major salivary glands in humans and higher primates. Hst 5 is the most potent of the 12 histatin family members and has fungicidal activity against blastoconidial and filamentous forms of Candida albicans. DUR31 only functions under high concentrations of Hst 5. Hst 5 cojugates to spermidine to be uptaken by DUR31. The sequence is that of Spermidine transporter DUR31 from Candida albicans (strain SC5314 / ATCC MYA-2876) (Yeast).